A 460-amino-acid polypeptide reads, in one-letter code: MVNHKLWGGRFEASLEDWVEEFGASIGFDYRLAPYDLQGSLAHVKMLGQTGIIAPEEAAAIQAGLEKLLVRYQAGELEFDVRNEDIHMNMEALLTEEIGPVAGKLHTARSRNDQVATDMHLYLKDQIGQIADKLLNLRQVLLNLAEEHVETIMPGYTHLQHAQPISFAHHLLAYYQMFSRDSQRFAFNLEHTNLSPLGAAALAGTTFSIDRELTADLLGFKGIYHNSLDAVSDRDFILEFLSNSSILIMHLSRLCEELINWCSYEYGFVSLSDTFSTGSSIMPQKKNPDMAELIRGKSGRVYGHLFSLLTVMKSLPLAYNKDLQEDKEGMFDTVDTIQKSLDIMAGMLSSMTVNKEKMLVSTQQDFSNATELADYLAKKGLPFREAHEIVGKLVLECSKAGYYLQDIPLSRYQEVSSLIEEDIYQALESQTAVQKRNSLGGTGFAQIRQELERAKRQLEK.

The protein belongs to the lyase 1 family. Argininosuccinate lyase subfamily.

Its subcellular location is the cytoplasm. The enzyme catalyses 2-(N(omega)-L-arginino)succinate = fumarate + L-arginine. The protein operates within amino-acid biosynthesis; L-arginine biosynthesis; L-arginine from L-ornithine and carbamoyl phosphate: step 3/3. This Streptococcus sanguinis (strain SK36) protein is Argininosuccinate lyase.